A 132-amino-acid polypeptide reads, in one-letter code: Small ribosomal subunit protein uS8 (132 aa).

Belongs to the universal ribosomal protein uS8 family. Part of the 30S ribosomal subunit. Contacts proteins S5 and S12.

In terms of biological role, one of the primary rRNA binding proteins, it binds directly to 16S rRNA central domain where it helps coordinate assembly of the platform of the 30S subunit. The protein is Small ribosomal subunit protein uS8 of Mycoplasmopsis synoviae (strain 53) (Mycoplasma synoviae).